The sequence spans 363 residues: NAD(P)H-quinone oxidoreductase subunit 1, chloroplastic (363 aa).

The next 8 helical transmembrane spans lie at 26–46, 96–116, 127–147, 175–195, 203–223, 253–273, 303–323, and 343–363; these read FVWICVPIVVLILGITLGVLV, WLFALGPAIVVIPVLLSFLVI, ISIGMFFWIAVSSVAPVGLLV, LALCVLSVVLMSNSLSTIEIV, ILGWNIWRQPVGFIAFVISAL, FGLFYVASYLNLFASSLFVTI, GLIAFAITLSKAYLFLFASIL, and FLLPVALGNLLLTASFELALL.

It belongs to the complex I subunit 1 family. In terms of assembly, NDH is composed of at least 16 different subunits, 5 of which are encoded in the nucleus.

The protein localises to the plastid. It localises to the chloroplast thylakoid membrane. The catalysed reaction is a plastoquinone + NADH + (n+1) H(+)(in) = a plastoquinol + NAD(+) + n H(+)(out). It catalyses the reaction a plastoquinone + NADPH + (n+1) H(+)(in) = a plastoquinol + NADP(+) + n H(+)(out). In terms of biological role, NDH shuttles electrons from NAD(P)H:plastoquinone, via FMN and iron-sulfur (Fe-S) centers, to quinones in the photosynthetic chain and possibly in a chloroplast respiratory chain. The immediate electron acceptor for the enzyme in this species is believed to be plastoquinone. Couples the redox reaction to proton translocation, and thus conserves the redox energy in a proton gradient. This is NAD(P)H-quinone oxidoreductase subunit 1, chloroplastic from Zygnema circumcarinatum (Green alga).